The primary structure comprises 372 residues: Tyrosine--tRNA ligase (372 aa).

5 residues coordinate L-tyrosine: tyrosine 37, tyrosine 169, glutamine 173, aspartate 176, and glutamine 191. The short motif at 246-250 is the 'KMSKS' region element; that stretch reads KMSKS. Lysine 249 serves as a coordination point for ATP.

This sequence belongs to the class-I aminoacyl-tRNA synthetase family. TyrS type 4 subfamily. As to quaternary structure, homodimer.

The protein localises to the cytoplasm. It catalyses the reaction tRNA(Tyr) + L-tyrosine + ATP = L-tyrosyl-tRNA(Tyr) + AMP + diphosphate + H(+). In terms of biological role, catalyzes the attachment of tyrosine to tRNA(Tyr) in a two-step reaction: tyrosine is first activated by ATP to form Tyr-AMP and then transferred to the acceptor end of tRNA(Tyr). The sequence is that of Tyrosine--tRNA ligase from Pyrobaculum arsenaticum (strain DSM 13514 / JCM 11321 / PZ6).